The following is a 362-amino-acid chain: Cyclic di-GMP phosphodiesterase PdeL (362 aa).

Residues 18–83 (HLSLPGSVSE…TFWRDIFFQY (66 aa)) form the HTH luxR-type domain. The H-T-H motif DNA-binding region spans 42–61 (VTEISQYRNRSAKTISHQKK). An EAL domain is found at 106 to 360 (HIVTPEAISL…KFISEWVMKA (255 aa)). Glutamine 127 serves as a coordination point for substrate. Glutamate 141 serves as a coordination point for Mg(2+). Residues 144-145 (VR) and asparagine 200 contribute to the substrate site. Positions 200, 232, and 262 each coordinate Mg(2+). Substrate-binding positions include aspartate 262, lysine 286, 319-322 (EGVE), and tyrosine 341.

As to quaternary structure, is in a fast thermodynamic monomer-homodimer equilibrium. Dimerization is required for PDE activity. Dimerization affinity is increased about 100-fold upon substrate binding. Requires Mg(2+) as cofactor. It depends on Mn(2+) as a cofactor.

It carries out the reaction 3',3'-c-di-GMP + H2O = 5'-phosphoguanylyl(3'-&gt;5')guanosine + H(+). With respect to regulation, strongly inhibited by Ca(2+). In terms of biological role, acts both as an enzyme and as a c-di-GMP sensor to couple transcriptional activity to the c-di-GMP status of the cell. Phosphodiesterase (PDE) that catalyzes the hydrolysis of cyclic-di-GMP (c-di-GMP) to 5'-pGpG. Also acts as a transcription factor to control its own expression. The chain is Cyclic di-GMP phosphodiesterase PdeL from Escherichia coli (strain K12).